The sequence spans 127 residues: Fluoride-specific ion channel FluC (127 aa).

4 helical membrane passes run 4–24 (SLLAIGLGAMVGAWLRWGLGM), 35–55 (PGTLLANLIGGYIIGLAIAFF), 68–88 (LLITGFCGGLTTFSTFSAEVV), and 96–116 (ILWALGSIALHVSGSLLMTAA). The Na(+) site is built by Gly75 and Thr78.

It belongs to the fluoride channel Fluc/FEX (TC 1.A.43) family.

The protein localises to the cell inner membrane. It carries out the reaction fluoride(in) = fluoride(out). With respect to regulation, na(+) is not transported, but it plays an essential structural role and its presence is essential for fluoride channel function. Its function is as follows. Fluoride-specific ion channel. Important for reducing fluoride concentration in the cell, thus reducing its toxicity. The chain is Fluoride-specific ion channel FluC from Pseudomonas putida (strain W619).